Here is a 188-residue protein sequence, read N- to C-terminus: Probable DNA-directed RNA polymerase subunit delta (188 aa).

Positions 14–83 (LSMIEVARAI…GDNKWGLRSW (70 aa)) constitute an HTH HARE-type domain. Residues 117 to 188 (GDEDAIDYSD…EDDEDDEEEE (72 aa)) are disordered.

Belongs to the RpoE family. RNAP is composed of a core of 2 alpha, a beta and a beta' subunits. The core is associated with a delta subunit and one of several sigma factors.

Its function is as follows. Participates in both the initiation and recycling phases of transcription. In the presence of the delta subunit, RNAP displays an increased specificity of transcription, a decreased affinity for nucleic acids, and an increased efficiency of RNA synthesis because of enhanced recycling. The protein is Probable DNA-directed RNA polymerase subunit delta of Streptococcus uberis (strain ATCC BAA-854 / 0140J).